Consider the following 35-residue polypeptide: Augerpeptide hheTx5 (35 aa).

In terms of processing, contains 4 disulfide bonds. In terms of tissue distribution, expressed by the venom duct.

It localises to the secreted. The protein is Augerpeptide hheTx5 of Hastula hectica (Sea snail).